The chain runs to 377 residues: Chaperone protein DnaJ (377 aa).

Residues 5-69 (EFYDRLGVSK…QKRSAYDQYG (65 aa)) enclose the J domain. The CR-type zinc finger occupies 133 to 215 (GVEKDVSYHR…CHGTGHEKET (83 aa)). Zn(2+) contacts are provided by cysteine 146, cysteine 149, cysteine 163, cysteine 166, cysteine 189, cysteine 192, cysteine 203, and cysteine 206. CXXCXGXG motif repeat units follow at residues 146-153 (CHTCAGSG), 163-170 (CGRCHGSG), 189-196 (CDVCHGSG), and 203-210 (CQTCHGTG).

This sequence belongs to the DnaJ family. Homodimer. Zn(2+) is required as a cofactor.

The protein localises to the cytoplasm. Participates actively in the response to hyperosmotic and heat shock by preventing the aggregation of stress-denatured proteins and by disaggregating proteins, also in an autonomous, DnaK-independent fashion. Unfolded proteins bind initially to DnaJ; upon interaction with the DnaJ-bound protein, DnaK hydrolyzes its bound ATP, resulting in the formation of a stable complex. GrpE releases ADP from DnaK; ATP binding to DnaK triggers the release of the substrate protein, thus completing the reaction cycle. Several rounds of ATP-dependent interactions between DnaJ, DnaK and GrpE are required for fully efficient folding. Also involved, together with DnaK and GrpE, in the DNA replication of plasmids through activation of initiation proteins. This chain is Chaperone protein DnaJ, found in Streptococcus uberis (strain ATCC BAA-854 / 0140J).